The primary structure comprises 333 residues: Adenosine deaminase (333 aa).

Zn(2+) contacts are provided by H12 and H14. The substrate site is built by H14, D16, and G170. H197 provides a ligand contact to Zn(2+). E200 acts as the Proton donor in catalysis. D278 is a binding site for Zn(2+). Position 279 (D279) interacts with substrate.

Belongs to the metallo-dependent hydrolases superfamily. Adenosine and AMP deaminases family. Adenosine deaminase subfamily. Requires Zn(2+) as cofactor.

It carries out the reaction adenosine + H2O + H(+) = inosine + NH4(+). It catalyses the reaction 2'-deoxyadenosine + H2O + H(+) = 2'-deoxyinosine + NH4(+). Functionally, catalyzes the hydrolytic deamination of adenosine and 2-deoxyadenosine. The sequence is that of Adenosine deaminase from Escherichia coli O81 (strain ED1a).